The following is a 199-amino-acid chain: Imidazoleglycerol-phosphate dehydratase (199 aa).

Belongs to the imidazoleglycerol-phosphate dehydratase family.

It is found in the cytoplasm. It carries out the reaction D-erythro-1-(imidazol-4-yl)glycerol 3-phosphate = 3-(imidazol-4-yl)-2-oxopropyl phosphate + H2O. It functions in the pathway amino-acid biosynthesis; L-histidine biosynthesis; L-histidine from 5-phospho-alpha-D-ribose 1-diphosphate: step 6/9. This chain is Imidazoleglycerol-phosphate dehydratase, found in Roseiflexus sp. (strain RS-1).